We begin with the raw amino-acid sequence, 270 residues long: Esterase (270 aa).

Residues S127, D216, and H244 each act as charge relay system in the active site.

The protein belongs to the LovG family.

The protein operates within mycotoxin biosynthesis. Functionally, esterase; part of the gene cluster that mediates the biosynthesis of the selective antifungal agent ascochitine, an o-quinone methide that plays a possible protective role against other microbial competitors in nature and is considered to be important for pathogenicity of legume-associated Didymella species. The pathway probably begins with the synthesis of a keto-aldehyde intermediate by the ascochitine non-reducing polyketide synthase pksAC from successive condensations of 4 malonyl-CoA units, presumably with a simple acetyl-CoA starter unit. Release of the keto-aldehyde intermediate is consistent with the presence of the C-terminal reductive release domain. The HR-PKS (orf7) probably makes a diketide starter unit which is passed to the non-reducing polyketide synthase pksAC for further extension, producing ascochital and ascochitine. The aldehyde dehydrogenase (orf1), the 2-oxoglutarate-dependent dioxygenase (orf3) and the dehydrogenase (orf9) are probably involved in subsequent oxidations of methyl groups to the carboxylic acid of the heterocyclic ring. The ascochitine gene cluster also includes a gene encoding a short peptide with a cupin domain (orf2) that is often found in secondary metabolite gene clusters and which function has still to be determined. This chain is Esterase, found in Didymella fabae (Leaf and pod spot disease fungus).